Reading from the N-terminus, the 420-residue chain is Riboflavin biosynthesis protein RibBA (420 aa).

The interval 1 to 202 (MTTFGTIEQA…IADLVAYRRR (202 aa)) is DHBP synthase. Residues 28-29 (RE), D33, 141-145 (RPGHT), and E165 each bind D-ribulose 5-phosphate. E29 contacts Mg(2+). H144 serves as a coordination point for Mg(2+). Residues 203 to 420 (TEKQVELVAE…RAVVGDGIGA (218 aa)) are GTP cyclohydrolase II. Residue 253-257 (RVHSE) participates in GTP binding. Residues C258, C269, and C271 each contribute to the Zn(2+) site. GTP is bound by residues Q274, 297-299 (EGR), and T319. Residue D331 is the Proton acceptor; for GTP cyclohydrolase activity of the active site. R333 acts as the Nucleophile; for GTP cyclohydrolase activity in catalysis. The GTP site is built by T354 and K359.

The protein in the N-terminal section; belongs to the DHBP synthase family. It in the C-terminal section; belongs to the GTP cyclohydrolase II family. Requires Mg(2+) as cofactor. Mn(2+) serves as cofactor. Zn(2+) is required as a cofactor.

It catalyses the reaction D-ribulose 5-phosphate = (2S)-2-hydroxy-3-oxobutyl phosphate + formate + H(+). The catalysed reaction is GTP + 4 H2O = 2,5-diamino-6-hydroxy-4-(5-phosphoribosylamino)-pyrimidine + formate + 2 phosphate + 3 H(+). It participates in cofactor biosynthesis; riboflavin biosynthesis; 2-hydroxy-3-oxobutyl phosphate from D-ribulose 5-phosphate: step 1/1. It functions in the pathway cofactor biosynthesis; riboflavin biosynthesis; 5-amino-6-(D-ribitylamino)uracil from GTP: step 1/4. In terms of biological role, catalyzes the conversion of D-ribulose 5-phosphate to formate and 3,4-dihydroxy-2-butanone 4-phosphate. Catalyzes the conversion of GTP to 2,5-diamino-6-ribosylamino-4(3H)-pyrimidinone 5'-phosphate (DARP), formate and pyrophosphate. The protein is Riboflavin biosynthesis protein RibBA of Salinispora arenicola (strain CNS-205).